A 389-amino-acid polypeptide reads, in one-letter code: Phosphatidylglycerol--prolipoprotein diacylglyceryl transferase (389 aa).

4 helical membrane-spanning segments follow: residues 28 to 48 (IIVAIGIAFGILMFVLKLIYF), 58 to 78 (FFIFIAVLTMVLGARAWYFLI), 98 to 118 (LAIQGGVLLTTLAGIIYFNVF), and 148 to 168 (ISVFVMLDLIAPCVLIGQAIG). Residue arginine 169 coordinates a 1,2-diacyl-sn-glycero-3-phospho-(1'-sn-glycerol). The next 3 membrane-spanning stretches (helical) occupy residues 220–240 (IPLFLIESFFNTIFFVFIYFV), 281–301 (IVFSALLILVGIVGIIYCQTL), and 309–329 (FWTYFFLYGWYKVAAFFTTLF).

Belongs to the Lgt family.

It localises to the cell membrane. The enzyme catalyses L-cysteinyl-[prolipoprotein] + a 1,2-diacyl-sn-glycero-3-phospho-(1'-sn-glycerol) = an S-1,2-diacyl-sn-glyceryl-L-cysteinyl-[prolipoprotein] + sn-glycerol 1-phosphate + H(+). It functions in the pathway protein modification; lipoprotein biosynthesis (diacylglyceryl transfer). Functionally, catalyzes the transfer of the diacylglyceryl group from phosphatidylglycerol to the sulfhydryl group of the N-terminal cysteine of a prolipoprotein, the first step in the formation of mature lipoproteins. In Mycoplasma pneumoniae (strain ATCC 29342 / M129 / Subtype 1) (Mycoplasmoides pneumoniae), this protein is Phosphatidylglycerol--prolipoprotein diacylglyceryl transferase.